A 107-amino-acid polypeptide reads, in one-letter code: Large ribosomal subunit protein eL33 (107 aa).

Belongs to the eukaryotic ribosomal protein eL33 family. Component of the large ribosomal subunit. Mature ribosomes consist of a small (40S) and a large (60S) subunit. The 40S subunit contains about 32 different proteins and 1 molecule of RNA (18S). The 60S subunit contains 45 different proteins and 3 molecules of RNA (25S, 5.8S and 5S).

It is found in the cytoplasm. Component of the ribosome, a large ribonucleoprotein complex responsible for the synthesis of proteins in the cell. The small ribosomal subunit (SSU) binds messenger RNAs (mRNAs) and translates the encoded message by selecting cognate aminoacyl-transfer RNA (tRNA) molecules. The large subunit (LSU) contains the ribosomal catalytic site termed the peptidyl transferase center (PTC), which catalyzes the formation of peptide bonds, thereby polymerizing the amino acids delivered by tRNAs into a polypeptide chain. The nascent polypeptides leave the ribosome through a tunnel in the LSU and interact with protein factors that function in enzymatic processing, targeting, and the membrane insertion of nascent chains at the exit of the ribosomal tunnel. The polypeptide is Large ribosomal subunit protein eL33 (Candida albicans (strain SC5314 / ATCC MYA-2876) (Yeast)).